The chain runs to 189 residues: Large ribosomal subunit protein bL9 (189 aa).

Belongs to the bacterial ribosomal protein bL9 family.

Binds to the 23S rRNA. The polypeptide is Large ribosomal subunit protein bL9 (Brucella anthropi (strain ATCC 49188 / DSM 6882 / CCUG 24695 / JCM 21032 / LMG 3331 / NBRC 15819 / NCTC 12168 / Alc 37) (Ochrobactrum anthropi)).